The primary structure comprises 155 residues: Small ribosomal subunit protein uS7 (155 aa).

The protein belongs to the universal ribosomal protein uS7 family. In terms of assembly, part of the 30S ribosomal subunit. Contacts proteins S9 and S11.

In terms of biological role, one of the primary rRNA binding proteins, it binds directly to 16S rRNA where it nucleates assembly of the head domain of the 30S subunit. Is located at the subunit interface close to the decoding center, probably blocks exit of the E-site tRNA. This chain is Small ribosomal subunit protein uS7, found in Chlorobium luteolum (strain DSM 273 / BCRC 81028 / 2530) (Pelodictyon luteolum).